The primary structure comprises 198 residues: Recombination protein RecR (198 aa).

The C4-type zinc-finger motif lies at 57–72; the sequence is CSTCQTLTDQDPCAIC. The Toprim domain occupies 80–175; sequence RMICVVEGVP…KVTRIAQGVP (96 aa).

The protein belongs to the RecR family.

Its function is as follows. May play a role in DNA repair. It seems to be involved in an RecBC-independent recombinational process of DNA repair. It may act with RecF and RecO. This Anaeromyxobacter dehalogenans (strain 2CP-C) protein is Recombination protein RecR.